Reading from the N-terminus, the 229-residue chain is Germin-like protein 2-4 (229 aa).

Residues 1–23 (MAHRRRCLLLLLAVLLPAMAARG) form the signal peptide. Residues C32 and C52 are joined by a disulfide bond. N57 carries an N-linked (GlcNAc...) asparagine glycan. In terms of domain architecture, Cupin type-1 spans 66 to 213 (SGVRAAGNFS…AFGLTPAELR (148 aa)). The Mn(2+) site is built by H115, H117, E122, and H161.

It belongs to the germin family. As to quaternary structure, oligomer (believed to be a pentamer but probably hexamer).

It localises to the secreted. The protein localises to the extracellular space. Its subcellular location is the apoplast. Its function is as follows. May play a role in plant defense. Probably has no oxalate oxidase activity even if the active site is conserved. In Oryza sativa subsp. japonica (Rice), this protein is Germin-like protein 2-4.